The chain runs to 193 residues: Peptidyl-tRNA hydrolase (193 aa).

Residue histidine 17 coordinates tRNA. The Proton acceptor role is filled by histidine 22. TRNA-binding residues include phenylalanine 68, asparagine 70, and asparagine 116.

It belongs to the PTH family. As to quaternary structure, monomer.

The protein resides in the cytoplasm. The enzyme catalyses an N-acyl-L-alpha-aminoacyl-tRNA + H2O = an N-acyl-L-amino acid + a tRNA + H(+). Its function is as follows. Hydrolyzes ribosome-free peptidyl-tRNAs (with 1 or more amino acids incorporated), which drop off the ribosome during protein synthesis, or as a result of ribosome stalling. Catalyzes the release of premature peptidyl moieties from peptidyl-tRNA molecules trapped in stalled 50S ribosomal subunits, and thus maintains levels of free tRNAs and 50S ribosomes. This Xanthomonas campestris pv. campestris (strain 8004) protein is Peptidyl-tRNA hydrolase.